The primary structure comprises 259 residues: uncharacterized protein (259 aa).

Residues Met-1–Thr-19 constitute a signal peptide (or 26). Residue Gly-214–Thr-221 coordinates ATP.

This is an uncharacterized protein from Bacillus subtilis (strain 168).